Consider the following 267-residue polypeptide: 3-methyl-2-oxobutanoate hydroxymethyltransferase (267 aa).

Residues D46 and D85 each contribute to the Mg(2+) site. 3-methyl-2-oxobutanoate contacts are provided by residues D46–S47, D85, and K115. E117 provides a ligand contact to Mg(2+). E184 acts as the Proton acceptor in catalysis.

Belongs to the PanB family. Homodecamer; pentamer of dimers. Mg(2+) serves as cofactor.

It is found in the cytoplasm. The enzyme catalyses 3-methyl-2-oxobutanoate + (6R)-5,10-methylene-5,6,7,8-tetrahydrofolate + H2O = 2-dehydropantoate + (6S)-5,6,7,8-tetrahydrofolate. The protein operates within cofactor biosynthesis; (R)-pantothenate biosynthesis; (R)-pantoate from 3-methyl-2-oxobutanoate: step 1/2. Its function is as follows. Catalyzes the reversible reaction in which hydroxymethyl group from 5,10-methylenetetrahydrofolate is transferred onto alpha-ketoisovalerate to form ketopantoate. The chain is 3-methyl-2-oxobutanoate hydroxymethyltransferase from Geobacter sulfurreducens (strain ATCC 51573 / DSM 12127 / PCA).